The chain runs to 336 residues: NADH-quinone oxidoreductase subunit H (336 aa).

Helical transmembrane passes span I14–V34, I82–I102, V115–G135, I161–V181, T186–A206, I247–V267, V273–V293, and V312–D332.

It belongs to the complex I subunit 1 family. As to quaternary structure, NDH-1 is composed of 14 different subunits. Subunits NuoA, H, J, K, L, M, N constitute the membrane sector of the complex.

It is found in the cell inner membrane. It carries out the reaction a quinone + NADH + 5 H(+)(in) = a quinol + NAD(+) + 4 H(+)(out). Functionally, NDH-1 shuttles electrons from NADH, via FMN and iron-sulfur (Fe-S) centers, to quinones in the respiratory chain. The immediate electron acceptor for the enzyme in this species is believed to be ubiquinone. Couples the redox reaction to proton translocation (for every two electrons transferred, four hydrogen ions are translocated across the cytoplasmic membrane), and thus conserves the redox energy in a proton gradient. This subunit may bind ubiquinone. This chain is NADH-quinone oxidoreductase subunit H, found in Rhodospirillum centenum (strain ATCC 51521 / SW).